A 133-amino-acid polypeptide reads, in one-letter code: Small ribosomal subunit protein uS8 (133 aa).

Belongs to the universal ribosomal protein uS8 family. As to quaternary structure, part of the 30S ribosomal subunit. Contacts proteins S5 and S12.

Its function is as follows. One of the primary rRNA binding proteins, it binds directly to 16S rRNA central domain where it helps coordinate assembly of the platform of the 30S subunit. In Chlamydia trachomatis serovar L2b (strain UCH-1/proctitis), this protein is Small ribosomal subunit protein uS8.